Reading from the N-terminus, the 240-residue chain is Biosynthetic peptidoglycan transglycosylase (240 aa).

A helical membrane pass occupies residues 27–47; that stretch reads VVLLFFFAVFALLLIFRFVPI.

It belongs to the glycosyltransferase 51 family.

The protein resides in the cell inner membrane. It catalyses the reaction [GlcNAc-(1-&gt;4)-Mur2Ac(oyl-L-Ala-gamma-D-Glu-L-Lys-D-Ala-D-Ala)](n)-di-trans,octa-cis-undecaprenyl diphosphate + beta-D-GlcNAc-(1-&gt;4)-Mur2Ac(oyl-L-Ala-gamma-D-Glu-L-Lys-D-Ala-D-Ala)-di-trans,octa-cis-undecaprenyl diphosphate = [GlcNAc-(1-&gt;4)-Mur2Ac(oyl-L-Ala-gamma-D-Glu-L-Lys-D-Ala-D-Ala)](n+1)-di-trans,octa-cis-undecaprenyl diphosphate + di-trans,octa-cis-undecaprenyl diphosphate + H(+). The protein operates within cell wall biogenesis; peptidoglycan biosynthesis. In terms of biological role, peptidoglycan polymerase that catalyzes glycan chain elongation from lipid-linked precursors. This Haemophilus influenzae (strain PittEE) protein is Biosynthetic peptidoglycan transglycosylase.